The chain runs to 876 residues: Phosphoenolpyruvate carboxylase (876 aa).

Catalysis depends on residues His138 and Lys543.

Belongs to the PEPCase type 1 family. Mg(2+) is required as a cofactor.

The catalysed reaction is oxaloacetate + phosphate = phosphoenolpyruvate + hydrogencarbonate. Functionally, forms oxaloacetate, a four-carbon dicarboxylic acid source for the tricarboxylic acid cycle. This is Phosphoenolpyruvate carboxylase from Pseudomonas fluorescens (strain ATCC BAA-477 / NRRL B-23932 / Pf-5).